Here is a 631-residue protein sequence, read N- to C-terminus: tRNA uridine 5-carboxymethylaminomethyl modification enzyme MnmG (631 aa).

15-20 (GAGHAG) is an FAD binding site. Residues 203–232 (TPPRVDGNTVDYSKTQEEPGDKEPRHFSYT) are disordered. Positions 216–232 (KTQEEPGDKEPRHFSYT) are enriched in basic and acidic residues. Residue 276 to 290 (GPRYCPSIEDKVVRF) coordinates NAD(+).

This sequence belongs to the MnmG family. Homodimer. Heterotetramer of two MnmE and two MnmG subunits. Requires FAD as cofactor.

Its subcellular location is the cytoplasm. Its function is as follows. NAD-binding protein involved in the addition of a carboxymethylaminomethyl (cmnm) group at the wobble position (U34) of certain tRNAs, forming tRNA-cmnm(5)s(2)U34. This chain is tRNA uridine 5-carboxymethylaminomethyl modification enzyme MnmG, found in Lactobacillus gasseri (strain ATCC 33323 / DSM 20243 / BCRC 14619 / CIP 102991 / JCM 1131 / KCTC 3163 / NCIMB 11718 / NCTC 13722 / AM63).